A 138-amino-acid polypeptide reads, in one-letter code: Iron sulfur cluster assembly protein 1 (138 aa).

This sequence belongs to the NifU family. As to quaternary structure, component of the core Fe-S cluster (ISC) assembly machinery. The cofactor is [2Fe-2S] cluster.

The protein localises to the cytoplasm. The protein operates within cofactor biosynthesis; iron-sulfur cluster biosynthesis. Functionally, scaffold protein for the de novo synthesis of iron-sulfur (Fe-S) clusters within mitosomes, which is required for maturation of both [2Fe-2S] and [4Fe-4S] proteins. First, a [2Fe-2S] cluster is transiently assembled on the scaffold protein ISU1. In a second step, the cluster is released from ISU1, transferred to a glutaredoxin, followed by the formation of [2Fe-2S] proteins, the synthesis of [4Fe-4S] clusters and their target-specific insertion into the recipient apoproteins. Cluster assembly on ISU1 depends on the function of the cysteine desulfurase complex NFS1-ISD11, which serves as the sulfur donor for cluster synthesis, the iron-binding protein frataxin as the putative iron donor, and the electron transfer chain comprised of ferredoxin reductase and ferredoxin, which receive their electrons from NADH. The polypeptide is Iron sulfur cluster assembly protein 1 (ISU1) (Trachipleistophora hominis (Microsporidian parasite)).